The following is a 534-amino-acid chain: MHVSNSKFIFVTGGVLSSLGKGVASASIGALLEGLGLSITLQKLDPYLNVDPGTMNPYQHGEVFVTEDGAETDLDLGHYERFTNTNLSKLNNITAGKIYNSVLEKERKGAYLGSTVQVIPHVTDEIKSMILKASKDKDIAIVEIGGTVGDIESLPFLEAIRQLQLEIGKENTLFIHLTYVPYISVAGELKTKPTQHSVKELRAIGIQPDIIICRSEVELPQDVKSKIAMFCNVKPENVISAYDVDYIYKIPLILKAQNLDKIIIDAFRLENKEPNLTKWENIVSSLEHLKDSVDIAIVGKYIKLKDAYKSLIEALIHGGIEHKLKVNMIWVDSENLNEKDLEHVDGILIPGGFGERGIEGKIRALNYGRTKNIPTFGICLGMQLMAVEFARNVLGFKDANSTEFDPNTSNPVIDIMEEQKGIENLGGTMRLGAYECLIKENTKAYEIYKENLIYERHRHRYEFNNKYKEHFEKHGFIASGIYPKKSLVEIIELQNHRWYIGCQFHPEFKSKPFKAHKLFASFIENAYIYKKERS.

The interval M1–L269 is amidoligase domain. S17 is a CTP binding site. S17 lines the UTP pocket. Residue S18–V23 participates in ATP binding. Y58 is a binding site for L-glutamine. Residue D75 coordinates ATP. The Mg(2+) site is built by D75 and E143. Residues D150–E152, K190–Q195, and K226 contribute to the CTP site. Residues K190–Q195 and K226 contribute to the UTP site. The region spanning D294–E532 is the Glutamine amidotransferase type-1 domain. L-glutamine is bound at residue G352. Residue C379 is the Nucleophile; for glutamine hydrolysis of the active site. Residues L380 to Q383, E403, and R460 contribute to the L-glutamine site. Residues H505 and E507 contribute to the active site.

The protein belongs to the CTP synthase family. Homotetramer.

The catalysed reaction is UTP + L-glutamine + ATP + H2O = CTP + L-glutamate + ADP + phosphate + 2 H(+). It carries out the reaction L-glutamine + H2O = L-glutamate + NH4(+). It catalyses the reaction UTP + NH4(+) + ATP = CTP + ADP + phosphate + 2 H(+). It participates in pyrimidine metabolism; CTP biosynthesis via de novo pathway; CTP from UDP: step 2/2. Allosterically activated by GTP, when glutamine is the substrate; GTP has no effect on the reaction when ammonia is the substrate. The allosteric effector GTP functions by stabilizing the protein conformation that binds the tetrahedral intermediate(s) formed during glutamine hydrolysis. Inhibited by the product CTP, via allosteric rather than competitive inhibition. Functionally, catalyzes the ATP-dependent amination of UTP to CTP with either L-glutamine or ammonia as the source of nitrogen. Regulates intracellular CTP levels through interactions with the four ribonucleotide triphosphates. This chain is CTP synthase, found in Hydrogenobaculum sp. (strain Y04AAS1).